The primary structure comprises 346 residues: Histidinol-phosphate aminotransferase (346 aa).

The residue at position 209 (Lys-209) is an N6-(pyridoxal phosphate)lysine.

This sequence belongs to the class-II pyridoxal-phosphate-dependent aminotransferase family. Histidinol-phosphate aminotransferase subfamily. Homodimer. Requires pyridoxal 5'-phosphate as cofactor.

It carries out the reaction L-histidinol phosphate + 2-oxoglutarate = 3-(imidazol-4-yl)-2-oxopropyl phosphate + L-glutamate. Its pathway is amino-acid biosynthesis; L-histidine biosynthesis; L-histidine from 5-phospho-alpha-D-ribose 1-diphosphate: step 7/9. This is Histidinol-phosphate aminotransferase from Aliivibrio fischeri (strain ATCC 700601 / ES114) (Vibrio fischeri).